The chain runs to 395 residues: Leucine aminopeptidase 1 (395 aa).

An N-terminal signal peptide occupies residues 1 to 19 (MKHLSLLALAAVAPTTALA). Positions 20-95 (GVIDHQQVTF…SVKSFEQTKV (76 aa)) are excised as a propeptide. A glycan (N-linked (GlcNAc...) asparagine) is linked at Asn187. Zn(2+)-binding residues include His195, Asp214, Glu253, and Asp280. A disulfide bridge links Cys329 with Cys333. A Zn(2+)-binding site is contributed by His362.

It belongs to the peptidase M28 family. M28E subfamily. As to quaternary structure, monomer. Requires Zn(2+) as cofactor.

The protein resides in the secreted. Its function is as follows. Extracellular aminopeptidase that allows assimilation of proteinaceous substrates. The polypeptide is Leucine aminopeptidase 1 (LAP1) (Uncinocarpus reesii (strain UAMH 1704)).